The chain runs to 95 residues: Enhancer of yellow 2b transcription factor (95 aa).

Belongs to the ENY2 family. As to expression, expressed specifically in testis.

Functionally, testis-specific paralog of the ubiquitously expressed transcription and mRNA export factor e(y)2. Cannot functionally replace e(y)2. The chain is Enhancer of yellow 2b transcription factor (e(y)2b) from Drosophila melanogaster (Fruit fly).